A 291-amino-acid chain; its full sequence is E3 ubiquitin-protein ligase MARCHF8 (291 aa).

The disordered stretch occupies residues Y22–I72. The span at K25 to L39 shows a compositional bias: basic and acidic residues. Low complexity predominate over residues S50 to I72. The RING-CH-type zinc finger occupies I72 to E133. Zn(2+) contacts are provided by C80, C83, C97, C99, H107, C110, C123, and C126. Transmembrane regions (helical) follow at residues C157 to I177 and F197 to V217. S253 bears the Phosphoserine mark.

In terms of assembly, interacts with CD86. In terms of tissue distribution, broadly expressed. Present in immature dendritic cells (at protein level).

The protein resides in the golgi apparatus membrane. The protein localises to the endoplasmic reticulum membrane. Its subcellular location is the cytoplasmic vesicle membrane. It localises to the lysosome membrane. It is found in the early endosome membrane. The catalysed reaction is S-ubiquitinyl-[E2 ubiquitin-conjugating enzyme]-L-cysteine + [acceptor protein]-L-lysine = [E2 ubiquitin-conjugating enzyme]-L-cysteine + N(6)-ubiquitinyl-[acceptor protein]-L-lysine.. It participates in protein modification; protein ubiquitination. In terms of biological role, E3 ubiquitin-protein ligase that plays several important roles in innate immunity and adaptive immunity. Mediates ubiquitination of CD86 and MHC class II proteins, such as HLA-DR alpha and beta, and promotes their subsequent endocytosis and sorting to lysosomes via multivesicular bodies. Possesses a very broad antiviral activity by specifically inactivating different viral fusion proteins. Targets and ubiquitinates cytoplasmic lysine residues of viral envelope glycoproteins with single transmembrane domains leading to their lysosomal degradation. Therefore, shows broad-spectrum inhibition against many viruses including retroviruses, rhabdoviruses, arenaviruses, sarbecoviruses or influenzaviruses. Strongly blocks human immunodeficiency virus type 1 envelope glycoprotein incorporation into virions by down-regulating its cell surface expression. Also blocks ebola virus glycoprotein/GP incorporation via surface down-regulation. Mediates 'Lys-63'-linked polyubiquitination of influenza M2 to target it to lysosome for degradation. Mediates the regulation of constitutive ubiquitination and trafficking of the viral restriction factor BST2 within the endocytic pathway. Plays a role in maintenance of immune tolerance to self by promoting the turnover and proteasomal degradation of PD-L1/CD274 via ubiquitination. Catalyzes the 'Lys-63'-linked polyubiquitylation of cGAS thereby inhibiting its DNA binding ability and impairing its antiviral innate immunity. Negatively regulates IL7-mediated T-cell homeostasis by mediating 'Lys-27'-linked polyubiquitination of IL7R, leading to its lysosomal degradation. (Microbial infection) Mediates 'Lys-63'-linked polyubiquitination of hepatitis C virus/HCV protein NS2 which allows its binding to HGS, an ESCRT-0 complex component, and this interaction is essential for HCV envelopment. The polypeptide is E3 ubiquitin-protein ligase MARCHF8 (Homo sapiens (Human)).